A 261-amino-acid polypeptide reads, in one-letter code: tRNA pseudouridine synthase A (261 aa).

Asp51 serves as the catalytic Nucleophile. Tyr109 contacts substrate.

This sequence belongs to the tRNA pseudouridine synthase TruA family. In terms of assembly, homodimer.

The catalysed reaction is uridine(38/39/40) in tRNA = pseudouridine(38/39/40) in tRNA. Its function is as follows. Formation of pseudouridine at positions 38, 39 and 40 in the anticodon stem and loop of transfer RNAs. The polypeptide is tRNA pseudouridine synthase A (Shewanella sediminis (strain HAW-EB3)).